The following is a 285-amino-acid chain: Sulfoquinovosyl glycerol transport system permease protein SmoH (285 aa).

The next 6 membrane-spanning stretches (helical) occupy residues 21–41 (FIAA…ILFT), 83–103 (FMVA…AAYA), 115–135 (ILSL…VPLF), 150–170 (LILP…VSFF), 195–215 (VVVP…FVNA), and 250–270 (PVIS…IVIF). The region spanning 79 to 270 (LFNSFMVALL…VPVAILIVIF (192 aa)) is the ABC transmembrane type-1 domain.

This sequence belongs to the binding-protein-dependent transport system permease family. The complex is probably composed of two ATP-binding proteins (SmoE), two transmembrane proteins (SmoG and SmoH) and a solute-binding protein (SmoF).

It is found in the cell inner membrane. Part of the ABC transporter complex SmoEFGH involved in sulfoquinovosyl glycerol (SQGro) uptake. Responsible for the translocation of the substrate across the membrane. This Agrobacterium fabrum (strain C58 / ATCC 33970) (Agrobacterium tumefaciens (strain C58)) protein is Sulfoquinovosyl glycerol transport system permease protein SmoH.